The sequence spans 203 residues: E3 ubiquitin-protein ligase RNF152 (203 aa).

Residues C12 to R55 form an RING-type zinc finger. A necessary for interaction with RRAGA region spans residues I106–T165. The helical transmembrane segment at S167–L187 threads the bilayer.

Belongs to the RNF152 family. As to quaternary structure, interacts with RRAGA (inactive GDP-bound form); stimulated by amino acid starvation. Interacts with SEC16A. Ubiquitinated. Autoubiquitinated in vitro, leading to its degradation by the proteasome. As to expression, widely expressed.

It localises to the lysosome membrane. It catalyses the reaction S-ubiquitinyl-[E2 ubiquitin-conjugating enzyme]-L-cysteine + [acceptor protein]-L-lysine = [E2 ubiquitin-conjugating enzyme]-L-cysteine + N(6)-ubiquitinyl-[acceptor protein]-L-lysine.. The protein operates within protein modification; protein ubiquitination. E3 ubiquitin-protein ligase that acts as a negative regulator of mTORC1 signaling by mediating ubiquitination of RagA/RRAGA and RHEB. Catalyzes 'Lys-63'-linked polyubiquitination of RagA/RRAGA in response to amino acid starvation, thereby regulating mTORC1 signaling. Also mediates monoubiquitination of RHEB, promoting its association with the TSC-TBC complex and subsequent inhibition. Also mediates 'Lys-48'-linked polyubiquitination of target proteins and their subsequent targeting to the proteasome for degradation. Induces apoptosis when overexpressed. The polypeptide is E3 ubiquitin-protein ligase RNF152 (Homo sapiens (Human)).